We begin with the raw amino-acid sequence, 297 residues long: N-acetylneuraminate lyase (297 aa).

Aceneuramate is bound by residues Ser47 and Thr48. The Proton donor role is filled by Tyr137. Residue Lys165 is the Schiff-base intermediate with substrate of the active site. Residues Thr167, Gly189, Asp191, Glu192, and Ser208 each contribute to the aceneuramate site.

This sequence belongs to the DapA family. NanA subfamily. In terms of assembly, homotetramer.

Its subcellular location is the cytoplasm. The catalysed reaction is aceneuramate = aldehydo-N-acetyl-D-mannosamine + pyruvate. It functions in the pathway amino-sugar metabolism; N-acetylneuraminate degradation; D-fructose 6-phosphate from N-acetylneuraminate: step 1/5. Its function is as follows. Catalyzes the reversible aldol cleavage of N-acetylneuraminic acid (sialic acid; Neu5Ac) to form pyruvate and N-acetylmannosamine (ManNAc) via a Schiff base intermediate. The chain is N-acetylneuraminate lyase from Escherichia coli (strain SMS-3-5 / SECEC).